The primary structure comprises 226 residues: Ribonuclease 3 (226 aa).

One can recognise an RNase III domain in the interval 6-128 (IQKLQKILGY…LIGSIFLDSN (123 aa)). E41 contributes to the Mg(2+) binding site. D45 is an active-site residue. Residues N114 and E117 each coordinate Mg(2+). Residue E117 is part of the active site. The DRBM domain occupies 155–225 (DPKTRLQEYL…AQNALIKLGI (71 aa)).

This sequence belongs to the ribonuclease III family. Homodimer. Mg(2+) serves as cofactor.

It localises to the cytoplasm. It catalyses the reaction Endonucleolytic cleavage to 5'-phosphomonoester.. Its function is as follows. Digests double-stranded RNA. Involved in the processing of primary rRNA transcript to yield the immediate precursors to the large and small rRNAs (23S and 16S). Processes some mRNAs, and tRNAs when they are encoded in the rRNA operon. Processes pre-crRNA and tracrRNA of type II CRISPR loci if present in the organism. This is Ribonuclease 3 from Buchnera aphidicola subsp. Baizongia pistaciae (strain Bp).